A 944-amino-acid chain; its full sequence is MDQNGASGSRPNRLSQGKEAYACERSATVSAAADRSNIINEMAKICEADRQTSAIARRTQVHERLAVANSDFVAVEDLILAYAEPTPEDQVEMIMRDFCSSPTYEEDEDEPSYESEPWFRFRNKRIRTYSRKRDPKSYMAVRTEKSSGTSGLSVQRDLNTSSTSVACDFDAASSQKIHEVLLNLSQYFSATAKASSPTPVPSQIDLPTEARQDSGDECFNAEVENLRDDLLQNGFTFEASIYDNEHEQEDSGKFNVCSDADSTPKKTDVEIAEHKKHLKGPTQAEHVGKEENTNFILEGIPLSEWLTPMEPPKISKDVIKNIPDKKVKLEPSSQKEQKSSKDSNESKIRAASCDITKKNEGTTVLDQPNAAQQENLSNDGDLLEEFLFNEWHPMQCSNGPSTSNDAIKVPKEEINSIKRNDEEQPEKETPNKSRSTSSHQLSFRKTFLKFIEISGEMKIKGEKFVEKVVSGLHHPSHKCNLRTEEYSDNHSQVMESTQRVEFKSALSKPIELLDEKETYDMLAKVEVGEINGKCSPLNNETIAEPEFCGFRTASNKAIPISEKMKIKTAEFMAEFQSKETNHQNDYLVNQPNDNSTSVGRDTAFKKSIEISEEMPTKASKLVVVDTTLGEPHQPKIDPVCSDLNESQFFGFRTASNKAIEITEAMEKRGAMFLAQSRATDQQAEWQPSDFPDIPHTSPKNEIHSINVENTKAVHTKTASETEFFGFRTASNKGIVISENTKKKVAQFMSEFQAADASTDSNKPIVISEESRNIAAKFVDEAATEDSPNKPTFCNVQSQENPLDIEHFKHDLFVERSAKEEHPLCSQPLVRTPRRSQEIHSSLSQLAGQSPLDQATKKSVIARRNLLSLKRKRKIVSSTETSTSCASPAMERFAPKPSSTSTPLADRDLNRSKDCAKNRQDAEDMSPICMQPKKSRRLGLSRSRY.

2 stretches are compositionally biased toward basic and acidic residues: residues 325–348 (KKVK…ESKI) and 415–431 (NSIK…ETPN). 2 disordered regions span residues 325-354 (KKVK…ASCD) and 415-440 (NSIK…SSHQ). 3 BRCA2 repeats span residues 543 to 577 (AEPE…EFQS), 644 to 678 (NESQ…QSRA), and 719 to 753 (SETE…EFQA). 2 disordered regions span residues 823–854 (LCSQ…LDQA) and 876–944 (SSTE…RSRY). Composition is skewed to polar residues over residues 838-852 (IHSS…SPLD) and 876-885 (SSTETSTSCA). Basic and acidic residues predominate over residues 904-921 (ADRDLNRSKDCAKNRQDA). Residues 932–944 (KKSRRLGLSRSRY) show a composition bias toward basic residues.

As to quaternary structure, interacts with Rad9 and spn-A/Rad51.

The protein resides in the nucleus. In terms of biological role, involved in and required for double-strand break repair by meiotic and mitotic homologous recombination. During meiosis, has a dual role in the repair of meiotic double-stranded breaks and the efficient activation of the meiotic recombination checkpoint. This chain is Breast cancer type 2 susceptibility protein homolog, found in Drosophila simulans (Fruit fly).